Reading from the N-terminus, the 215-residue chain is MKKITRIGIGGPVGSGKTAVIETITPRLIALGIKPLIITNDVVTTEDAKQVRRTLHGVLIEEKIVGVETGACPHTAVREDPSMNIAAVEELEDKYPDSDVILIESGGDNLTLTFSPALADFYIYVIDVAAGDKIPRKNGAGVCQSDILVINKKDLAPYVGASLEVMARDSKLMRGKKPFLFTNCKTGEGVDDLLQLILDMALFDVRTRPPLAASA.

11–18 contributes to the GTP binding site; it reads GPVGSGKT.

Belongs to the SIMIBI class G3E GTPase family. UreG subfamily. In terms of assembly, homodimer. UreD, UreF and UreG form a complex that acts as a GTP-hydrolysis-dependent molecular chaperone, activating the urease apoprotein by helping to assemble the nickel containing metallocenter of UreC. The UreE protein probably delivers the nickel.

The protein localises to the cytoplasm. Facilitates the functional incorporation of the urease nickel metallocenter. This process requires GTP hydrolysis, probably effectuated by UreG. The sequence is that of Urease accessory protein UreG 2 from Methylorubrum extorquens (strain PA1) (Methylobacterium extorquens).